The chain runs to 104 residues: Pole-localizer protein TmaR (104 aa).

Coiled-coil stretches lie at residues Ile7–Arg34 and Ser76–Glu96.

This sequence belongs to the pole-localizer TmaR family.

Its subcellular location is the cytoplasm. Its function is as follows. Pole-localizer protein involved in the regulation of several cellular processes. The protein is Pole-localizer protein TmaR of Vibrio atlanticus (strain LGP32) (Vibrio splendidus (strain Mel32)).